Reading from the N-terminus, the 307-residue chain is Porphobilinogen deaminase (307 aa).

Cys-239 carries the post-translational modification S-(dipyrrolylmethanemethyl)cysteine.

The protein belongs to the HMBS family. As to quaternary structure, monomer. It depends on dipyrromethane as a cofactor.

It carries out the reaction 4 porphobilinogen + H2O = hydroxymethylbilane + 4 NH4(+). Its pathway is porphyrin-containing compound metabolism; protoporphyrin-IX biosynthesis; coproporphyrinogen-III from 5-aminolevulinate: step 2/4. Tetrapolymerization of the monopyrrole PBG into the hydroxymethylbilane pre-uroporphyrinogen in several discrete steps. The chain is Porphobilinogen deaminase from Campylobacter jejuni subsp. jejuni serotype O:23/36 (strain 81-176).